The chain runs to 435 residues: MKGVNMEKQQPSKAALLSIIPGLGQIYNKQKAKGFIFLGVTIVFVLYFLALATPELSNLITLGDKPGRDNSLFMLIRGAFHLIFVIVYVLFYFSNIKDAHTIAKRINNGIPVPRTLKDMIKGIYENGFPYLLIIPSYVAMTFAIIFPVIVTLMIAFTNYDFQHLPPNKLLDWVGLTNFTNIWSLSTFRSAFGSVLSWTIIWALAASTLQIVIGIFTAIIANQPFIKGKRIFGVIFLLPWAVPAFITILTFSNMFNDSVGAINTQVLPILAKFLPFLDGALIPWKTDPTWTKIALIMMQGWLGFPYIYVLTLGILQSIPNDLYEAAYIDGANAWQKFRNITFPMILAVAAPTLISQYTFNFNNFSIMYLFNGGGPGSVGGGAGSTDILISWIYRLTTGTSPQYSMAAAVTLIISIIVISISMIAFKKLHAFDMEDV.

A run of 10 helical transmembrane segments spans residues Gly-34–Pro-54, Phe-73–Phe-93, Tyr-130–Val-150, Ile-199–Ile-219, Ile-230–Phe-250, Thr-263–Trp-283, Leu-294–Leu-314, Asn-338–Phe-358, Gly-371–Ile-391, and Met-404–Phe-424. In terms of domain architecture, ABC transmembrane type-1 spans Leu-195–Ala-423.

This sequence belongs to the binding-protein-dependent transport system permease family. MalFG subfamily.

The protein localises to the cell membrane. Its function is as follows. Part of the binding-protein-dependent transport system for maltodextrin; probably responsible for the translocation of the substrate across the membrane. The sequence is that of Maltodextrin transport system permease protein MalC (malC) from Streptococcus pneumoniae serotype 4 (strain ATCC BAA-334 / TIGR4).